Here is a 58-residue protein sequence, read N- to C-terminus: Galectin-1 (58 aa).

One can recognise a Galectin domain in the interval 2 to 58 (GITXTSLHVAPGARLAVKGDIPAGAKSWVINLGKGENDIMLHFNARFDAHGDIRTIV). Residues 43-47 (HFNAR) and histidine 51 each bind a beta-D-galactoside.

As to quaternary structure, monomer. Detected in most tissues, most abundantly in skin.

It localises to the secreted. Its subcellular location is the extracellular space. It is found in the extracellular matrix. Its function is as follows. May regulate cell apoptosis and cell differentiation. Binds beta-galactoside and a wide array of complex carbohydrates. The sequence is that of Galectin-1 from Podarcis hispanicus (Iberian wall lizard).